We begin with the raw amino-acid sequence, 347 residues long: tRNA N6-adenosine threonylcarbamoyltransferase (347 aa).

Fe cation-binding residues include histidine 111 and histidine 115. Substrate contacts are provided by residues 134 to 138 (LVSGG), aspartate 167, glycine 180, and asparagine 276. A Fe cation-binding site is contributed by aspartate 304.

It belongs to the KAE1 / TsaD family. The cofactor is Fe(2+).

Its subcellular location is the cytoplasm. It carries out the reaction L-threonylcarbamoyladenylate + adenosine(37) in tRNA = N(6)-L-threonylcarbamoyladenosine(37) in tRNA + AMP + H(+). In terms of biological role, required for the formation of a threonylcarbamoyl group on adenosine at position 37 (t(6)A37) in tRNAs that read codons beginning with adenine. Is involved in the transfer of the threonylcarbamoyl moiety of threonylcarbamoyl-AMP (TC-AMP) to the N6 group of A37, together with TsaE and TsaB. TsaD likely plays a direct catalytic role in this reaction. This chain is tRNA N6-adenosine threonylcarbamoyltransferase, found in Nitrosospira multiformis (strain ATCC 25196 / NCIMB 11849 / C 71).